The following is a 121-amino-acid chain: Large ribosomal subunit protein bL12 (121 aa).

It belongs to the bacterial ribosomal protein bL12 family. Homodimer. Part of the ribosomal stalk of the 50S ribosomal subunit. Forms a multimeric L10(L12)X complex, where L10 forms an elongated spine to which 2 to 4 L12 dimers bind in a sequential fashion. Binds GTP-bound translation factors.

Forms part of the ribosomal stalk which helps the ribosome interact with GTP-bound translation factors. Is thus essential for accurate translation. The chain is Large ribosomal subunit protein bL12 from Pseudomonas putida (strain GB-1).